A 126-amino-acid chain; its full sequence is Type II methyltransferase M.HgiGI (126 aa).

The SAM-dependent MTase C5-type domain maps to 1-126; the sequence is MKTIDLFAGC…ARLSKIHQQA (126 aa). Cys-75 is an active-site residue.

Belongs to the class I-like SAM-binding methyltransferase superfamily. C5-methyltransferase family.

The catalysed reaction is a 2'-deoxycytidine in DNA + S-adenosyl-L-methionine = a 5-methyl-2'-deoxycytidine in DNA + S-adenosyl-L-homocysteine + H(+). A methylase, recognizes the double-stranded sequence 5'-GRCGYC-3', methylates C-? on both strands, and protects the DNA from cleavage by the HgiEI endonuclease. This is Type II methyltransferase M.HgiGI from Herpetosiphon aurantiacus (Herpetosiphon giganteus).